Reading from the N-terminus, the 1024-residue chain is Non-canonical nonribosomal peptide synthetase FrzA (1024 aa).

The adenylation (A) domain stretch occupies residues 29–425 (RAQKSHQAIA…GRRDHQVKVR (397 aa)). Residues 534–611 (NASQDVRSAL…ALTSIIKQRL (78 aa)) enclose the Carrier domain. O-(pantetheine 4'-phosphoryl)serine is present on serine 571. The Thioester reductase (TE) domain occupies 655-898 (LTGGTGFVGA…VPVDYVNAAI (244 aa)).

It belongs to the NRP synthetase family. Requires pantetheine 4'-phosphate as cofactor.

It carries out the reaction L-tyrosinal + AMP + diphosphate + NADP(+) = L-tyrosine + ATP + NADPH + H(+). It functions in the pathway secondary metabolite biosynthesis. Its function is as follows. Non-canonical nonribosomal peptide synthetase; part of the gene cluster that mediates the biosynthesis of the alkaloid (-)-FR901483, a potent immunosuppressant that shows efficacy in animal models and a probable inhibitor of purine nucleotide biosynthesis by targeting phosphoribosylpyrophosphate amidotransferase (PPAT). Within the pathway, FrzA catalyzes the reduction of L-tyrosine via its C-terminal reductase domain to produce L-tyrosinal. The biosynthesis of (-)-FR901483 starts with the condensation of two L-tyrosines to yield (S,S)-dityrosyl-piperazine. This process occurs in 3 steps with the non-canonical nonribosomal peptide synthetase FrzA catalyzing the reduction of L-tyrosine into L-tyrosinal, the spontaneous condensation of 2 L-tyrosinal units, and the subsequent reduction by the NmrA-like family domain-containing oxidoreductase FrzB. The cytochrome P450 monooxygenase FrzC then performs coupling between N10 and C1' to morph the piperazine into a 1,4-diazabicyclo[3.2.1]octane spiro-fused to a 2,5-cyclohexadienone. The dienone portion is further reduced to cyclohexanone by the flavin-dependent reductase FrzD. The methyltranserases (MTs) FrzE and FrzF are then involved in the methylation at the C10' amine and the C4 phenolic oxygen, respectively. The order of the two MTs appear to be interchangeable. Cleavage of the C9-N10' bond by the dioxygenase FrzG then leads to formation of a conjugated iminium. In addition to the oxidation of C9, an additional dehydrogenation between C7 and C8 can occur to give a likely shunt product. The next biosynthetic step is the intramolecular aldol condensation catalyzed by the newly identified aldolase FrzH to yield an aza-tricyclic product with the formation of a C9-C3' bond. The short-chain dehydrogenase/reductase FrzI then produces dephospho-(-)-FR901483 that is phosphorylated at C4'-OH into (-)-FR901483 by the phosphotransferase FrzJ. This Cladobotryum sp protein is Non-canonical nonribosomal peptide synthetase FrzA.